Here is a 234-residue protein sequence, read N- to C-terminus: N-(5'-phosphoribosyl)anthranilate isomerase (234 aa).

Positions 211 to 234 (RAASSSPRPVDGESPAFQRSEKAG) are disordered.

The protein belongs to the TrpF family.

The catalysed reaction is N-(5-phospho-beta-D-ribosyl)anthranilate = 1-(2-carboxyphenylamino)-1-deoxy-D-ribulose 5-phosphate. Its pathway is amino-acid biosynthesis; L-tryptophan biosynthesis; L-tryptophan from chorismate: step 3/5. The chain is N-(5'-phosphoribosyl)anthranilate isomerase from Afipia carboxidovorans (strain ATCC 49405 / DSM 1227 / KCTC 32145 / OM5) (Oligotropha carboxidovorans).